A 272-amino-acid polypeptide reads, in one-letter code: UPF0759 protein YecE (272 aa).

This sequence belongs to the UPF0759 family.

This chain is UPF0759 protein YecE (yecE), found in Escherichia coli (strain K12).